The following is a 616-amino-acid chain: Chaperone protein HtpG (616 aa).

An a; substrate-binding region spans residues 1–334 (MTIKQTHSFQ…TADLSLNLSR (334 aa)). The segment at 335–549 (EILQDNKVIK…ENEMGGNMER (215 aa)) is b. Residues 550 to 616 (IMKSLGQDIP…FVKRINKLIN (67 aa)) form a c region.

It belongs to the heat shock protein 90 family. In terms of assembly, homodimer.

It localises to the cytoplasm. Functionally, molecular chaperone. Has ATPase activity. The polypeptide is Chaperone protein HtpG (Vesicomyosocius okutanii subsp. Calyptogena okutanii (strain HA)).